The primary structure comprises 330 residues: Ketol-acid reductoisomerase (NADP(+)) (330 aa).

One can recognise a KARI N-terminal Rossmann domain in the interval 2–182 (ARMYYDEDAN…GGTRAGVLET (181 aa)). NADP(+)-binding positions include 25–28 (YGSQ), S51, S53, and 83–86 (DEVQ). H108 is an active-site residue. G134 is an NADP(+) binding site. Positions 183 to 328 (TFREETETDL…QDLRAMMSWL (146 aa)) constitute a KARI C-terminal knotted domain. Mg(2+) is bound by residues D191, E195, E227, and E231. S252 provides a ligand contact to substrate.

This sequence belongs to the ketol-acid reductoisomerase family. The cofactor is Mg(2+).

The enzyme catalyses (2R)-2,3-dihydroxy-3-methylbutanoate + NADP(+) = (2S)-2-acetolactate + NADPH + H(+). It carries out the reaction (2R,3R)-2,3-dihydroxy-3-methylpentanoate + NADP(+) = (S)-2-ethyl-2-hydroxy-3-oxobutanoate + NADPH + H(+). The protein operates within amino-acid biosynthesis; L-isoleucine biosynthesis; L-isoleucine from 2-oxobutanoate: step 2/4. It functions in the pathway amino-acid biosynthesis; L-valine biosynthesis; L-valine from pyruvate: step 2/4. Its function is as follows. Involved in the biosynthesis of branched-chain amino acids (BCAA). Catalyzes an alkyl-migration followed by a ketol-acid reduction of (S)-2-acetolactate (S2AL) to yield (R)-2,3-dihydroxy-isovalerate. In the isomerase reaction, S2AL is rearranged via a Mg-dependent methyl migration to produce 3-hydroxy-3-methyl-2-ketobutyrate (HMKB). In the reductase reaction, this 2-ketoacid undergoes a metal-dependent reduction by NADPH to yield (R)-2,3-dihydroxy-isovalerate. The sequence is that of Ketol-acid reductoisomerase (NADP(+)) from Microcystis aeruginosa (strain NIES-843 / IAM M-2473).